The chain runs to 195 residues: Rubrerythrin (195 aa).

Positions 1-150 constitute a Ferritin-like diiron domain; it reads MKSLKGTKTA…KLAKNIEEGK (150 aa). Residues Glu-20, Glu-53, Glu-98, Glu-101, Glu-132, His-135, Cys-162, Cys-165, Cys-178, and Cys-181 each coordinate Fe(3+). Residues 157-195 form the Rubredoxin-like domain; sequence VVLWKCGNCGFIWEGAEAPLKCPACLHPQAYFEVFKETY.

Homodimer. Possesses two rubredoxin-like centers and two non-sulfur oxo-bridged di-iron centers per dimer. It depends on Fe(3+) as a cofactor.

Its subcellular location is the cytoplasm. Functionally, may provide oxidative stress protection via catalytic reduction of intracellular hydrogen peroxide. The polypeptide is Rubrerythrin (rbr) (Clostridium perfringens (strain 13 / Type A)).